The following is a 119-amino-acid chain: Large ribosomal subunit protein uL18 (119 aa).

The protein belongs to the universal ribosomal protein uL18 family. As to quaternary structure, part of the 50S ribosomal subunit; part of the 5S rRNA/L5/L18/L25 subcomplex. Contacts the 5S and 23S rRNAs.

This is one of the proteins that bind and probably mediate the attachment of the 5S RNA into the large ribosomal subunit, where it forms part of the central protuberance. The sequence is that of Large ribosomal subunit protein uL18 from Helicobacter pylori (strain HPAG1).